The chain runs to 206 residues: Probable thymidylate kinase (206 aa).

Residue 7 to 14 (GIDGSGKS) participates in ATP binding.

The protein belongs to the thymidylate kinase family.

It catalyses the reaction dTMP + ATP = dTDP + ADP. The sequence is that of Probable thymidylate kinase from Methanospirillum hungatei JF-1 (strain ATCC 27890 / DSM 864 / NBRC 100397 / JF-1).